A 252-amino-acid chain; its full sequence is tRNA pseudouridine synthase A (252 aa).

Asp54 (nucleophile) is an active-site residue. Tyr112 lines the substrate pocket.

The protein belongs to the tRNA pseudouridine synthase TruA family. In terms of assembly, homodimer.

It catalyses the reaction uridine(38/39/40) in tRNA = pseudouridine(38/39/40) in tRNA. Its function is as follows. Formation of pseudouridine at positions 38, 39 and 40 in the anticodon stem and loop of transfer RNAs. This Oenococcus oeni (strain ATCC BAA-331 / PSU-1) protein is tRNA pseudouridine synthase A.